Here is a 338-residue protein sequence, read N- to C-terminus: DNA-directed RNA polymerase subunit alpha (338 aa).

Positions 1–234 are alpha N-terminal domain (alpha-NTD); that stretch reads MIHKNWQELI…DQLSIFVNFD (234 aa). The tract at residues 250–338 is alpha C-terminal domain (alpha-CTD); the sequence is FNPLLLKKVD…ELAKKYEDNF (89 aa).

Belongs to the RNA polymerase alpha chain family. In terms of assembly, homodimer. The RNAP catalytic core consists of 2 alpha, 1 beta, 1 beta' and 1 omega subunit. When a sigma factor is associated with the core the holoenzyme is formed, which can initiate transcription.

It catalyses the reaction RNA(n) + a ribonucleoside 5'-triphosphate = RNA(n+1) + diphosphate. Functionally, DNA-dependent RNA polymerase catalyzes the transcription of DNA into RNA using the four ribonucleoside triphosphates as substrates. This is DNA-directed RNA polymerase subunit alpha from Jannaschia sp. (strain CCS1).